The following is a 281-amino-acid chain: sn-glycerol-3-phosphate transport system permease protein UgpE (281 aa).

6 helical membrane-spanning segments follow: residues 14–34 (VMLI…FVAA), 85–105 (LAIT…IVYF), 113–133 (FFWM…FPTV), 142–162 (MDSY…TFLF), 188–210 (FFDM…TFIY), and 247–267 (WNQV…VVLL). The ABC transmembrane type-1 domain occupies 77–268 (LLNSFVMALA…LPPLLVVLLM (192 aa)).

The protein belongs to the binding-protein-dependent transport system permease family. UgpAE subfamily. In terms of assembly, the complex is composed of two ATP-binding proteins (UgpC), two transmembrane proteins (UgpA and UgpE) and a solute-binding protein (UgpB).

It is found in the cell inner membrane. Part of the ABC transporter complex UgpBAEC involved in sn-glycerol-3-phosphate (G3P) import. Probably responsible for the translocation of the substrate across the membrane. In Pectobacterium atrosepticum (strain SCRI 1043 / ATCC BAA-672) (Erwinia carotovora subsp. atroseptica), this protein is sn-glycerol-3-phosphate transport system permease protein UgpE (ugpE).